The primary structure comprises 253 residues: 1-(5-phosphoribosyl)-5-[(5-phosphoribosylamino)methylideneamino] imidazole-4-carboxamide isomerase (253 aa).

Residue D8 is the Proton acceptor of the active site. The Proton donor role is filled by D129.

It belongs to the HisA/HisF family.

The protein resides in the cytoplasm. The enzyme catalyses 1-(5-phospho-beta-D-ribosyl)-5-[(5-phospho-beta-D-ribosylamino)methylideneamino]imidazole-4-carboxamide = 5-[(5-phospho-1-deoxy-D-ribulos-1-ylimino)methylamino]-1-(5-phospho-beta-D-ribosyl)imidazole-4-carboxamide. Its pathway is amino-acid biosynthesis; L-histidine biosynthesis; L-histidine from 5-phospho-alpha-D-ribose 1-diphosphate: step 4/9. The chain is 1-(5-phosphoribosyl)-5-[(5-phosphoribosylamino)methylideneamino] imidazole-4-carboxamide isomerase from Microcystis aeruginosa (strain NIES-843 / IAM M-2473).